We begin with the raw amino-acid sequence, 99 residues long: Large ribosomal subunit protein uL23 (99 aa).

Contacts protein L29, and trigger factor when it is bound to the ribosome. Part of the 50S ribosomal subunit.

In terms of biological role, one of the early assembly proteins it binds 23S rRNA. One of the proteins that surrounds the polypeptide exit tunnel on the outside of the ribosome. Forms the main docking site for trigger factor binding to the ribosome. This is Large ribosomal subunit protein uL23 from Rhodopseudomonas palustris (strain ATCC BAA-98 / CGA009).